The chain runs to 472 residues: Calcitonin gene-related peptide type 1 receptor (472 aa).

The N-terminal stretch at 1–28 (MGLLLRSALFKYIIIVLIMLNLRGYVLA) is a signal peptide. Topologically, residues 29 to 149 (EQEQGSQIPL…FTHEKVKTAL (121 aa)) are extracellular. Intrachain disulfides connect cysteine 58/cysteine 84, cysteine 75/cysteine 115, and cysteine 98/cysteine 137. N-linked (GlcNAc...) asparagine glycans are attached at residues asparagine 76, asparagine 128, and asparagine 133. The helical transmembrane segment at 150–174 (NLYYLTIIGHGLSIASLLISLGIFF) threads the bilayer. Over 175-185 (YFKNLSCQRIT) the chain is Cytoplasmic. Residues 186-208 (LHKNLFFSFVCNSIITIISLSAV) form a helical membrane-spanning segment. Residues 209 to 219 (ANNQALVATNP) are Extracellular-facing. Residues 220–248 (VSCKISQFIHLYLMGCNYFWMLCEGIYLH) traverse the membrane as a helical segment. Residues 249–262 (TLIVVAVFAEKQHL) lie on the Cytoplasmic side of the membrane. Residues 263–283 (MWYYLLGWGFPLIPACIHAVA) form a helical membrane-spanning segment. Residues 284–299 (RSLYYNDNCWISSETH) are Extracellular-facing. The helical transmembrane segment at 300–324 (LLYIIHGPICAALLVNLFFLLNIVR) threads the bilayer. The Cytoplasmic segment spans residues 325–339 (VLITKLKVTHQAESN). Residues 340–361 (LYMKAVRATLILVPLLGIEFVL) traverse the membrane as a helical segment. Residues 362 to 376 (FPWKPEGRIAEEIYD) are Extracellular-facing. A helical membrane pass occupies residues 377–397 (YVMHILMHYQGLLVATIFCFF). Residues 398–472 (NGEVQAVLKR…VFFKTEKQYM (75 aa)) lie on the Cytoplasmic side of the membrane.

The protein belongs to the G-protein coupled receptor 2 family.

Its subcellular location is the cell membrane. May function as G protein-coupled receptor for calcitonin-gene-related peptides and adrenomedullin. Specificity may be modulated by accessory proteins. May activate cAMP-dependent pathway. The polypeptide is Calcitonin gene-related peptide type 1 receptor (calcrl) (Xenopus tropicalis (Western clawed frog)).